The chain runs to 419 residues: DNA ligase (419 aa).

The NTD stretch occupies residues 1 to 120; that stretch reads MLNHFPGHCS…ARQKRGAHTN (120 aa). An AD domain region spans residues 121 to 317; that stretch reads RGMIPPMLVK…NYHSAHLAKL (197 aa). The active-site N6-AMP-lysine intermediate is the lysine 151. 3 residues coordinate ATP: lysine 151, glutamate 203, and phenylalanine 232. An a divalent metal cation-binding site is contributed by glutamate 203. Glutamate 291 is a binding site for a divalent metal cation. The ATP site is built by isoleucine 294 and lysine 316. Residues 318 to 419 are OB domain; that stretch reads KPLLDAEFIL…REPINVLEII (102 aa).

Belongs to the ATP-dependent DNA ligase family.

Its subcellular location is the virion. It carries out the reaction ATP + (deoxyribonucleotide)n-3'-hydroxyl + 5'-phospho-(deoxyribonucleotide)m = (deoxyribonucleotide)n+m + AMP + diphosphate.. Very low-fidelity DNA ligase that seals nicks in double-stranded DNA during DNA repair. Together with the viral repair DNA polymerase X, fills the single nucleotide gaps generated by the AP endonuclease. It is not essential for viral replication and recombination. Displays a very low adenylation activity towards DNA with 3'-dideoxy- or 3'-amino-terminated nicks compared to regular nick DNA. This is DNA ligase from African swine fever virus (isolate Tick/South Africa/Pretoriuskop Pr4/1996) (ASFV).